A 1463-amino-acid chain; its full sequence is Kinesin-like protein KIF15 (1463 aa).

The region spanning 18–354 (AIKVFVRVRP…LKFARRAKMI (337 aa)) is the Kinesin motor domain. 99 to 106 (GQTGSGKT) is a binding site for ATP. The segment at 387 to 424 (AEGSIPRGPSESGDSQMSNSSTESNGPVSGQQSGSSSS) is disordered. The span at 398–414 (SGDSQMSNSSTESNGPV) shows a compositional bias: polar residues. The span at 415 to 424 (SGQQSGSSSS) shows a compositional bias: low complexity. Coiled-coil stretches lie at residues 436-517 (SLRD…LEHN) and 586-646 (TSTL…QGMK). Disordered stretches follow at residues 686–720 (AGEE…SGDI), 1335–1356 (FKEK…SKLT), and 1409–1444 (QLGK…EAGA). Positions 701-715 (DNGSPLRSHSTNSLP) are enriched in polar residues. Positions 1418–1428 (EQMKRDYEALQ) are enriched in basic and acidic residues.

Belongs to the TRAFAC class myosin-kinesin ATPase superfamily. Kinesin family. KLP2 subfamily. In terms of assembly, homodimer.

Its subcellular location is the cytoplasm. It localises to the cytoskeleton. The protein resides in the spindle. Functionally, plus-end directed kinesin-like motor enzyme involved in mitotic spindle assembly. Plays a role in positioning spindle poles during mitosis, specifically at prometaphase. In Strongylocentrotus purpuratus (Purple sea urchin), this protein is Kinesin-like protein KIF15 (KIF15).